The primary structure comprises 45 residues: Natriuretic peptide OsNP-d (45 aa).

A propeptide spanning residues Pro1–Leu5 is cleaved from the precursor. Cys14 and Cys30 form a disulfide bridge.

It belongs to the natriuretic peptide family. In terms of tissue distribution, expressed by the venom gland.

It is found in the secreted. Functionally, snake venom natriuretic peptide that targets both NPR1 and NPR2. Exhibits hypotensive and vasodepressor activities. The polypeptide is Natriuretic peptide OsNP-d (Oxyuranus scutellatus scutellatus (Australian taipan)).